The following is a 162-amino-acid chain: 2-C-methyl-D-erythritol 2,4-cyclodiphosphate synthase (162 aa).

Residues Asp-12 and His-14 each coordinate a divalent metal cation. Residues 12–14 (DVH) and 38–39 (HS) contribute to the 4-CDP-2-C-methyl-D-erythritol 2-phosphate site. His-46 is a binding site for a divalent metal cation. 4-CDP-2-C-methyl-D-erythritol 2-phosphate is bound by residues 60–62 (DIG), 65–69 (FPDTD), and Arg-146.

The protein belongs to the IspF family. As to quaternary structure, homotrimer. A divalent metal cation is required as a cofactor.

The catalysed reaction is 4-CDP-2-C-methyl-D-erythritol 2-phosphate = 2-C-methyl-D-erythritol 2,4-cyclic diphosphate + CMP. The protein operates within isoprenoid biosynthesis; isopentenyl diphosphate biosynthesis via DXP pathway; isopentenyl diphosphate from 1-deoxy-D-xylulose 5-phosphate: step 4/6. Functionally, involved in the biosynthesis of isopentenyl diphosphate (IPP) and dimethylallyl diphosphate (DMAPP), two major building blocks of isoprenoid compounds. Catalyzes the conversion of 4-diphosphocytidyl-2-C-methyl-D-erythritol 2-phosphate (CDP-ME2P) to 2-C-methyl-D-erythritol 2,4-cyclodiphosphate (ME-CPP) with a corresponding release of cytidine 5-monophosphate (CMP). This is 2-C-methyl-D-erythritol 2,4-cyclodiphosphate synthase from Bordetella bronchiseptica (strain ATCC BAA-588 / NCTC 13252 / RB50) (Alcaligenes bronchisepticus).